The chain runs to 364 residues: tRNA 2-selenouridine synthase (364 aa).

The Rhodanese domain maps to 14–137 (LIADTPIIDV…LRQTTIQATI (124 aa)). Cys-97 (S-selanylcysteine intermediate) is an active-site residue.

It belongs to the SelU family. As to quaternary structure, monomer.

It catalyses the reaction 5-methylaminomethyl-2-thiouridine(34) in tRNA + selenophosphate + (2E)-geranyl diphosphate + H2O + H(+) = 5-methylaminomethyl-2-selenouridine(34) in tRNA + (2E)-thiogeraniol + phosphate + diphosphate. It carries out the reaction 5-methylaminomethyl-2-thiouridine(34) in tRNA + (2E)-geranyl diphosphate = 5-methylaminomethyl-S-(2E)-geranyl-thiouridine(34) in tRNA + diphosphate. The catalysed reaction is 5-methylaminomethyl-S-(2E)-geranyl-thiouridine(34) in tRNA + selenophosphate + H(+) = 5-methylaminomethyl-2-(Se-phospho)selenouridine(34) in tRNA + (2E)-thiogeraniol. The enzyme catalyses 5-methylaminomethyl-2-(Se-phospho)selenouridine(34) in tRNA + H2O = 5-methylaminomethyl-2-selenouridine(34) in tRNA + phosphate. In terms of biological role, involved in the post-transcriptional modification of the uridine at the wobble position (U34) of tRNA(Lys), tRNA(Glu) and tRNA(Gln). Catalyzes the conversion of 2-thiouridine (S2U-RNA) to 2-selenouridine (Se2U-RNA). Acts in a two-step process involving geranylation of 2-thiouridine (S2U) to S-geranyl-2-thiouridine (geS2U) and subsequent selenation of the latter derivative to 2-selenouridine (Se2U) in the tRNA chain. This chain is tRNA 2-selenouridine synthase, found in Escherichia coli O139:H28 (strain E24377A / ETEC).